Reading from the N-terminus, the 223-residue chain is GTP cyclohydrolase 1 (223 aa).

3 residues coordinate Zn(2+): Cys114, His117, and Cys185.

Belongs to the GTP cyclohydrolase I family. In terms of assembly, homomer.

It carries out the reaction GTP + H2O = 7,8-dihydroneopterin 3'-triphosphate + formate + H(+). The protein operates within cofactor biosynthesis; 7,8-dihydroneopterin triphosphate biosynthesis; 7,8-dihydroneopterin triphosphate from GTP: step 1/1. The protein is GTP cyclohydrolase 1 of Chlorobium phaeovibrioides (strain DSM 265 / 1930) (Prosthecochloris vibrioformis (strain DSM 265)).